The primary structure comprises 432 residues: Adenylosuccinate synthetase (432 aa).

GTP contacts are provided by residues 13 to 19 (GDEGKGK) and 41 to 43 (GHT). Aspartate 14 functions as the Proton acceptor in the catalytic mechanism. Residues aspartate 14 and glycine 41 each coordinate Mg(2+). Residues 14 to 17 (DEGK), 39 to 42 (NAGH), threonine 130, arginine 144, glutamine 225, threonine 240, and arginine 304 each bind IMP. The active-site Proton donor is histidine 42. 300-306 (ATTGRSR) is a binding site for substrate. GTP-binding positions include arginine 306, 332-334 (KLD), and 415-417 (STG).

The protein belongs to the adenylosuccinate synthetase family. As to quaternary structure, homodimer. It depends on Mg(2+) as a cofactor.

It is found in the cytoplasm. It carries out the reaction IMP + L-aspartate + GTP = N(6)-(1,2-dicarboxyethyl)-AMP + GDP + phosphate + 2 H(+). It participates in purine metabolism; AMP biosynthesis via de novo pathway; AMP from IMP: step 1/2. Its function is as follows. Plays an important role in the de novo pathway of purine nucleotide biosynthesis. Catalyzes the first committed step in the biosynthesis of AMP from IMP. The polypeptide is Adenylosuccinate synthetase (Marinomonas sp. (strain MWYL1)).